The following is a 638-amino-acid chain: Autolysin (638 aa).

Residues 1–28 (MSLATRRFGAAAALLVAACVLCTAPAWA) form the signal peptide. A propeptide spans 29-183 (QNETTGTGMV…LKSILKGSQK (155 aa)) (activation peptide). A glycan (N-linked (GlcNAc...) asparagine) is linked at Asn30. Residues 95–102 (PRCNVPRA) carry the Cysteine switch motif. Cys97 is a binding site for Zn(2+). An N-linked (GlcNAc...) asparagine glycan is attached at Asn126. The interval 269–292 (VTPPPRPPRPPRPPPRAGSTISSL) is disordered. The segment covering 270–284 (TPPPRPPRPPRPPPR) has biased composition (pro residues). An N-linked (GlcNAc...) asparagine glycan is attached at Asn296. His396 is a Zn(2+) binding site. Glu397 is an active-site residue. Zn(2+) is bound by residues His400 and His406. 4 N-linked (GlcNAc...) asparagine glycosylation sites follow: Asn458, Asn465, Asn470, and Asn523.

Belongs to the peptidase M11 family. Requires Zn(2+) as cofactor. In terms of processing, present in 2 forms: an inactive V-form in vegetative cells and an active and soluble G-form. The V-form enzyme may be converted to the G-form enzyme during gametic differentiation under nitrogen-starved conditions.

The protein resides in the periplasm. It is found in the secreted. Its subcellular location is the cell wall. It carries out the reaction Cleavage of the proline- and hydroxyproline-rich proteins of the Chlamydomonas cell wall. Also cleaves azocasein, gelatin and Leu-Trp-Met-|-Arg-Phe-Ala.. Its function is as follows. Mediates digestion of the cell walls of the 2 mating type gametes during mating as a necessary prelude to cell fusion. This enzyme acts specifically on the framework proteins (inner wall) of the cell wall, cleaving several model peptides at specific sites. The polypeptide is Autolysin (Chlamydomonas reinhardtii (Chlamydomonas smithii)).